The primary structure comprises 322 residues: UDP-N-acetylenolpyruvoylglucosamine reductase (322 aa).

Positions R36–G202 constitute an FAD-binding PCMH-type domain. R182 is an active-site residue. Residue S231 is the Proton donor of the active site. E301 is a catalytic residue.

The protein belongs to the MurB family. Requires FAD as cofactor.

Its subcellular location is the cytoplasm. The enzyme catalyses UDP-N-acetyl-alpha-D-muramate + NADP(+) = UDP-N-acetyl-3-O-(1-carboxyvinyl)-alpha-D-glucosamine + NADPH + H(+). The protein operates within cell wall biogenesis; peptidoglycan biosynthesis. In terms of biological role, cell wall formation. The protein is UDP-N-acetylenolpyruvoylglucosamine reductase of Brucella suis (strain ATCC 23445 / NCTC 10510).